A 363-amino-acid polypeptide reads, in one-letter code: 3-dehydroquinate synthase (363 aa).

NAD(+)-binding positions include 134–135, lysine 147, and lysine 156; that span reads TT. Glutamate 189, histidine 254, and histidine 271 together coordinate Zn(2+).

It belongs to the sugar phosphate cyclases superfamily. Dehydroquinate synthase family. It depends on Co(2+) as a cofactor. Requires Zn(2+) as cofactor. The cofactor is NAD(+).

The protein localises to the cytoplasm. The enzyme catalyses 7-phospho-2-dehydro-3-deoxy-D-arabino-heptonate = 3-dehydroquinate + phosphate. The protein operates within metabolic intermediate biosynthesis; chorismate biosynthesis; chorismate from D-erythrose 4-phosphate and phosphoenolpyruvate: step 2/7. In terms of biological role, catalyzes the conversion of 3-deoxy-D-arabino-heptulosonate 7-phosphate (DAHP) to dehydroquinate (DHQ). The protein is 3-dehydroquinate synthase of Prochlorococcus marinus (strain AS9601).